Here is a 215-residue protein sequence, read N- to C-terminus: Ribose-5-phosphate isomerase A (215 aa).

Residues 26–29 (TGST), 79–82 (DGAD), and 92–95 (KGGG) contribute to the substrate site. Residue glutamate 101 is the Proton acceptor of the active site. Lysine 119 contributes to the substrate binding site.

This sequence belongs to the ribose 5-phosphate isomerase family. In terms of assembly, homodimer.

The catalysed reaction is aldehydo-D-ribose 5-phosphate = D-ribulose 5-phosphate. Its pathway is carbohydrate degradation; pentose phosphate pathway; D-ribose 5-phosphate from D-ribulose 5-phosphate (non-oxidative stage): step 1/1. In terms of biological role, catalyzes the reversible conversion of ribose-5-phosphate to ribulose 5-phosphate. The chain is Ribose-5-phosphate isomerase A from Stenotrophomonas maltophilia (strain R551-3).